A 103-amino-acid chain; its full sequence is Protein translation factor SUI1 homolog (103 aa).

The protein belongs to the SUI1 family.

This Methanocaldococcus jannaschii (strain ATCC 43067 / DSM 2661 / JAL-1 / JCM 10045 / NBRC 100440) (Methanococcus jannaschii) protein is Protein translation factor SUI1 homolog.